We begin with the raw amino-acid sequence, 364 residues long: DNA polymerase IV (364 aa).

The region spanning 14-198 (IIHIDMDAFF…LPIEKFHGVG (185 aa)) is the UmuC domain. Mg(2+) contacts are provided by Asp18 and Asp116. Residue Glu117 is part of the active site.

This sequence belongs to the DNA polymerase type-Y family. As to quaternary structure, monomer. Mg(2+) serves as cofactor.

It localises to the cytoplasm. It catalyses the reaction DNA(n) + a 2'-deoxyribonucleoside 5'-triphosphate = DNA(n+1) + diphosphate. Poorly processive, error-prone DNA polymerase involved in untargeted mutagenesis. Copies undamaged DNA at stalled replication forks, which arise in vivo from mismatched or misaligned primer ends. These misaligned primers can be extended by PolIV. Exhibits no 3'-5' exonuclease (proofreading) activity. May be involved in translesional synthesis, in conjunction with the beta clamp from PolIII. This is DNA polymerase IV from Streptococcus pyogenes serotype M5 (strain Manfredo).